Consider the following 649-residue polypeptide: UvrABC system protein C (649 aa).

Positions 12-91 (SSPGVYLMKS…IKQHRPKYNI (80 aa)) constitute a GIY-YIG domain. Positions 201 to 236 (NEVARLYRSKMNLASEQMRYEDAARYRDLLRAIEVT) constitute a UVR domain. Residues 603–649 (RLHGGPLPNPPPPGEGAMGDGSIPSPRNGVMDDSIPSPSGRGWPKAG) form a disordered region.

It belongs to the UvrC family. Interacts with UvrB in an incision complex.

Its subcellular location is the cytoplasm. In terms of biological role, the UvrABC repair system catalyzes the recognition and processing of DNA lesions. UvrC both incises the 5' and 3' sides of the lesion. The N-terminal half is responsible for the 3' incision and the C-terminal half is responsible for the 5' incision. In Geobacter sp. (strain M21), this protein is UvrABC system protein C.